The following is a 129-amino-acid chain: Lysozyme C-3 (129 aa).

The C-type lysozyme domain occupies 1–129 (KVYERCELAA…VSRWIRGCRL (129 aa)). 4 disulfide bridges follow: cysteine 6–cysteine 127, cysteine 30–cysteine 115, cysteine 64–cysteine 80, and cysteine 76–cysteine 94. Active-site residues include glutamate 35 and aspartate 52.

This sequence belongs to the glycosyl hydrolase 22 family.

It localises to the secreted. It carries out the reaction Hydrolysis of (1-&gt;4)-beta-linkages between N-acetylmuramic acid and N-acetyl-D-glucosamine residues in a peptidoglycan and between N-acetyl-D-glucosamine residues in chitodextrins.. Functionally, lysozymes have primarily a bacteriolytic function; those in tissues and body fluids are associated with the monocyte-macrophage system and enhance the activity of immunoagents. In Anas platyrhynchos (Mallard), this protein is Lysozyme C-3.